We begin with the raw amino-acid sequence, 1278 residues long: Dynactin subunit 1 (1278 aa).

Positions 1 to 25 are disordered; sequence MAQSKRHVYSRTPSGSRMSAEASAR. A CAP-Gly domain is found at 48–90; it reads GATLFATGKWVGVILDEAKGKNDGTVQGRKYFTCDEGHGIFVR. The segment at 100–223 is disordered; the sequence is GADTTSPETP…SKEEEGLRAQ (124 aa). Residues 102–114 are compositionally biased toward polar residues; sequence DTTSPETPDSSAS. The residue at position 108 (threonine 108) is a Phosphothreonine. Residues 129–152 show a composition bias toward basic residues; it reads SKLRGLKPKKAPTARKTTTRRPKP. Threonine 145, threonine 146, and threonine 147 each carry phosphothreonine; by SLK. Over residues 161–184 the composition is skewed to low complexity; sequence AGASSSLGPSGSASAGELSSSEPS. The residue at position 179 (serine 179) is a Phosphoserine; by PLK1. Serine 212 carries the phosphoserine; by CDK1 modification. Coiled-coil stretches lie at residues 213 to 547, 943 to 1049, and 1182 to 1211; these read PSKE…RQQQ, LKLE…EGLR, and SAQLMEQVAQLKSLSDTVEKLKDEVLKETV. The span at 214 to 223 shows a compositional bias: basic and acidic residues; that stretch reads SKEEEGLRAQ. An interaction with HPS6 region spans residues 911-1278; sequence EYDAERPPSK…LHQLHSRLIS (368 aa).

This sequence belongs to the dynactin 150 kDa subunit family. Monomer and homodimer. Subunit of dynactin, a multiprotein complex part of a tripartite complex with dynein and a adapter, such as BICDL1, BICD2 or HOOK3. The dynactin complex is built around ACTR1A/ACTB filament and consists of an actin-related filament composed of a shoulder domain, a pointed end and a barbed end. Its length is defined by its flexible shoulder domain. The soulder is composed of 2 DCTN1 subunits, 4 DCTN2 and 2 DCTN3. DCTN1/p150(glued) binds directly to microtubules and to cytoplasmic dynein. The 4 DCNT2 (via N-terminus) bind the ACTR1A filament and act as molecular rulers to determine the length. The pointed end is important for binding dynein-dynactin cargo adapters. Consists of 4 subunits: ACTR10, DCNT4, DCTN5 and DCTN6. The barbed end is composed of a CAPZA1:CAPZB heterodimers, which binds ACTR1A/ACTB filament and dynactin and stabilizes dynactin. Interacts with the C-terminus of MAPRE1, MAPRE2 and MAPRE3. Interacts (via C-terminus) with SNX6. Interacts with CLN3, DYNAP, ECPAS and FBXL5. Interacts with MISP; this interaction regulates its distribution at the cell cortex. Interacts with CEP131. Interacts with CEP126. Interacts with CLIP1. Interacts with dynein intermediate chain and dynein heavy chain. Interacts with PLK1 (via POLO-box domain). Interacts with TBCB. Binds preferentially to tyrosinated microtubules than to detyrosinated microtubules. Interacts with PARD6A. Interacts with HPS6. Interacts with KIF3A. Interacts with BICD2. Interacts with DST (isoform 9). Interacts with DST (isoform 1). Identified in a complex with MREG and RILP. Interacts with BCCIP (isoform 2/alpha). Interacts with DCDC1. Interacts with AKNA. Interacts with DYNC1I2. Interacts with RUFY3 and RUFY4. Ubiquitinated by a SCF complex containing FBXL5, leading to its degradation by the proteasome. Post-translationally, phosphorylation by SLK at Thr-145, Thr-146 and Thr-147 targets DCTN1 to the centrosome. It is uncertain if SLK phosphorylates all three threonines or one or two of them. PLK1-mediated phosphorylation at Ser-179 is essential for its localization in the nuclear envelope, promotes its dissociation from microtubules during early mitosis and positively regulates nuclear envelope breakdown during prophase. Brain.

Its subcellular location is the cytoplasm. It localises to the cytoskeleton. The protein localises to the microtubule organizing center. The protein resides in the centrosome. It is found in the centriole. Its subcellular location is the spindle. It localises to the nucleus envelope. The protein localises to the cell cortex. Functionally, part of the dynactin complex that activates the molecular motor dynein for ultra-processive transport along microtubules. Plays a key role in dynein-mediated retrograde transport of vesicles and organelles along microtubules by recruiting and tethering dynein to microtubules. Binds to both dynein and microtubules providing a link between specific cargos, microtubules and dynein. Essential for targeting dynein to microtubule plus ends, recruiting dynein to membranous cargos and enhancing dynein processivity (the ability to move along a microtubule for a long distance without falling off the track). Can also act as a brake to slow the dynein motor during motility along the microtubule. Can regulate microtubule stability by promoting microtubule formation, nucleation and polymerization and by inhibiting microtubule catastrophe in neurons. Inhibits microtubule catastrophe by binding both to microtubules and to tubulin, leading to enhanced microtubule stability along the axon. Plays a role in metaphase spindle orientation. Plays a role in centriole cohesion and subdistal appendage organization and function. Its recruitment to the centriole in a KIF3A-dependent manner is essential for the maintenance of centriole cohesion and the formation of subdistal appendage. Also required for microtubule anchoring at the mother centriole. Plays a role in primary cilia formation. The chain is Dynactin subunit 1 from Homo sapiens (Human).